Here is a 269-residue protein sequence, read N- to C-terminus: MFSDKMILIAGPCVIEGEEITLEIASKIHELVSPYADRIHWIFKSSYDKANRSSINSYRGPGLSEGLRILSKVKETLGVEILTDVHSPEEARAAAEVCDILQIPAFLCRQTDLLVAAAETNAIINIKKGQFLSPWDMQGPVDKVLSTGNNKIILTERGCSFGYNNLVSDMRSIPVLSSMGFPVVFDGTHSVQLPGGLKTQSGGQTEFIPTLTRAALAAGAHGLFIETHSHPAIAKSDAASMLPLKTFEALLPLWDQLYTCVRSFEMASV.

This sequence belongs to the KdsA family.

It is found in the cytoplasm. It carries out the reaction D-arabinose 5-phosphate + phosphoenolpyruvate + H2O = 3-deoxy-alpha-D-manno-2-octulosonate-8-phosphate + phosphate. It participates in carbohydrate biosynthesis; 3-deoxy-D-manno-octulosonate biosynthesis; 3-deoxy-D-manno-octulosonate from D-ribulose 5-phosphate: step 2/3. The protein operates within bacterial outer membrane biogenesis; lipopolysaccharide biosynthesis. This is 2-dehydro-3-deoxyphosphooctonate aldolase from Chlamydia felis (strain Fe/C-56) (Chlamydophila felis).